We begin with the raw amino-acid sequence, 341 residues long: GTPase Obg (341 aa).

The region spanning 1 to 159 (MKFLDQAKVY…RTLWLRLKLI (159 aa)) is the Obg domain. An OBG-type G domain is found at 160–327 (ADAGLIGLPN…MLRAGAHMIE (168 aa)). GTP-binding positions include 166-173 (GLPNAGKS), 191-195 (FTTLY), 212-215 (DIPG), 279-282 (SQID), and 308-310 (SAV). Positions 173 and 193 each coordinate Mg(2+).

It belongs to the TRAFAC class OBG-HflX-like GTPase superfamily. OBG GTPase family. Monomer. Requires Mg(2+) as cofactor.

The protein localises to the cytoplasm. An essential GTPase which binds GTP, GDP and possibly (p)ppGpp with moderate affinity, with high nucleotide exchange rates and a fairly low GTP hydrolysis rate. Plays a role in control of the cell cycle, stress response, ribosome biogenesis and in those bacteria that undergo differentiation, in morphogenesis control. This chain is GTPase Obg, found in Bartonella quintana (strain Toulouse) (Rochalimaea quintana).